Reading from the N-terminus, the 114-residue chain is Small ribosomal subunit protein uS13m (114 aa).

The disordered stretch occupies residues 92-114 (DGLPLRGQRSHTNARTSRKRIRK).

The protein belongs to the universal ribosomal protein uS13 family. As to quaternary structure, part of the small ribosomal subunit.

It is found in the mitochondrion. Functionally, located at the top of the head of the small subunit, it contacts several helices of the 18S rRNA. The sequence is that of Small ribosomal subunit protein uS13m (RPS13) from Oenothera berteroana (Bertero's evening primrose).